Reading from the N-terminus, the 719-residue chain is Phosphoribosylformylglycinamidine synthase subunit PurL (719 aa).

His47 is an active-site residue. Tyr50 and Lys89 together coordinate ATP. Glu91 contributes to the Mg(2+) binding site. Substrate is bound by residues 92–95 (SHNH) and Arg114. Catalysis depends on His93, which acts as the Proton acceptor. Residue Asp115 coordinates Mg(2+). Substrate is bound at residue Gln238. Asp266 contributes to the Mg(2+) binding site. Residue 310–312 (ESQ) participates in substrate binding. Residues Asp488 and Gly525 each coordinate ATP. Position 526 (Asn526) interacts with Mg(2+). Ser528 is a binding site for substrate.

The protein belongs to the FGAMS family. As to quaternary structure, monomer. Part of the FGAM synthase complex composed of 1 PurL, 1 PurQ and 2 PurS subunits.

The protein localises to the cytoplasm. It carries out the reaction N(2)-formyl-N(1)-(5-phospho-beta-D-ribosyl)glycinamide + L-glutamine + ATP + H2O = 2-formamido-N(1)-(5-O-phospho-beta-D-ribosyl)acetamidine + L-glutamate + ADP + phosphate + H(+). It participates in purine metabolism; IMP biosynthesis via de novo pathway; 5-amino-1-(5-phospho-D-ribosyl)imidazole from N(2)-formyl-N(1)-(5-phospho-D-ribosyl)glycinamide: step 1/2. In terms of biological role, part of the phosphoribosylformylglycinamidine synthase complex involved in the purines biosynthetic pathway. Catalyzes the ATP-dependent conversion of formylglycinamide ribonucleotide (FGAR) and glutamine to yield formylglycinamidine ribonucleotide (FGAM) and glutamate. The FGAM synthase complex is composed of three subunits. PurQ produces an ammonia molecule by converting glutamine to glutamate. PurL transfers the ammonia molecule to FGAR to form FGAM in an ATP-dependent manner. PurS interacts with PurQ and PurL and is thought to assist in the transfer of the ammonia molecule from PurQ to PurL. This chain is Phosphoribosylformylglycinamidine synthase subunit PurL, found in Roseobacter denitrificans (strain ATCC 33942 / OCh 114) (Erythrobacter sp. (strain OCh 114)).